The chain runs to 290 residues: Small ribosomal subunit protein uS2 (290 aa).

Low complexity predominate over residues 263–282; it reads ATAGATWEAEAGGDWAAESA. The segment at 263–290 is disordered; sequence ATAGATWEAEAGGDWAAESAQPNPETKW.

The protein belongs to the universal ribosomal protein uS2 family. Component of the small ribosomal subunit. Mature ribosomes consist of a small (40S) and a large (60S) subunit. The 40S subunit contains about 33 different proteins and 1 molecule of RNA (18S). The 60S subunit contains about 49 different proteins and 3 molecules of RNA (25S, 5.8S and 5S). Interacts with rps21.

The protein resides in the cytoplasm. Functionally, required for the assembly and/or stability of the 40S ribosomal subunit. Required for the processing of the 20S rRNA-precursor to mature 18S rRNA in a late step of the maturation of 40S ribosomal subunits. The sequence is that of Small ribosomal subunit protein uS2 (rps0) from Talaromyces stipitatus (strain ATCC 10500 / CBS 375.48 / QM 6759 / NRRL 1006) (Penicillium stipitatum).